An 880-amino-acid chain; its full sequence is Probable dipeptidyl-aminopeptidase B (880 aa).

The segment covering 1-26 has biased composition (basic and acidic residues); the sequence is MPRQRAPKEEEAELLTKQERSARSSE. The tract at residues 1–71 is disordered; that stretch reads MPRQRAPKEE…KYTDEDDEAQ (71 aa). Residues 1–93 lie on the Cytoplasmic side of the membrane; that stretch reads MPRQRAPKEE…PISVDKKTRR (93 aa). Residues 30-40 show a composition bias toward low complexity; it reads DTSISSISTTS. The helical; Signal-anchor for type II membrane protein transmembrane segment at 94–114 threads the bilayer; that stretch reads WLWIVGIACVTGWALALVFFL. Over 115–880 the chain is Vacuolar; sequence MSGSYKHVST…AQVDARMERR (766 aa). Asparagine 533 carries N-linked (GlcNAc...) asparagine glycosylation. The active-site Charge relay system is the serine 724. N-linked (GlcNAc...) asparagine glycosylation occurs at asparagine 778. Catalysis depends on charge relay system residues aspartate 801 and histidine 834.

This sequence belongs to the peptidase S9B family.

The protein localises to the vacuole membrane. It carries out the reaction Release of an N-terminal dipeptide, Xaa-Yaa-|-Zaa-, from a polypeptide, preferentially when Yaa is Pro, provided Zaa is neither Pro nor hydroxyproline.. Functionally, type IV dipeptidyl-peptidase which removes N-terminal dipeptides sequentially from polypeptides having unsubstituted N-termini provided that the penultimate residue is proline. The polypeptide is Probable dipeptidyl-aminopeptidase B (dapB) (Pyrenophora tritici-repentis (strain Pt-1C-BFP) (Wheat tan spot fungus)).